Consider the following 689-residue polypeptide: Glycine--tRNA ligase beta subunit (689 aa).

It belongs to the class-II aminoacyl-tRNA synthetase family. As to quaternary structure, tetramer of two alpha and two beta subunits.

The protein localises to the cytoplasm. The enzyme catalyses tRNA(Gly) + glycine + ATP = glycyl-tRNA(Gly) + AMP + diphosphate. The chain is Glycine--tRNA ligase beta subunit (glyS) from Pasteurella multocida (strain Pm70).